We begin with the raw amino-acid sequence, 78 residues long: Large ribosomal subunit protein bL28 (78 aa).

The interval 1 to 20 (MSRVCQVTGKRPVTGNNRSH) is disordered.

This sequence belongs to the bacterial ribosomal protein bL28 family.

This Vibrio atlanticus (strain LGP32) (Vibrio splendidus (strain Mel32)) protein is Large ribosomal subunit protein bL28.